The chain runs to 112 residues: uncharacterized protein (112 aa).

Disordered regions lie at residues 1 to 53 and 80 to 112; these read MSKL…QRLK and MINQ…MLEL. Residues 8–22 show a composition bias toward polar residues; it reads SALQKLIESQKNPNA. A compositionally biased stretch (basic residues) spans 86–96; that stretch reads ETKKRKRKQKK. Residues 101–112 show a composition bias toward acidic residues; that stretch reads DYGVFEEDMLEL.

It is found in the nucleus. The protein resides in the nucleolus. This is an uncharacterized protein from Schizosaccharomyces pombe (strain 972 / ATCC 24843) (Fission yeast).